Here is a 268-residue protein sequence, read N- to C-terminus: Putative esterase/lipase 2 (268 aa).

Residue His-28 is part of the active site. His-96 serves as the catalytic Charge relay system.

Belongs to the lipase/esterase LIP3/BchO family.

This chain is Putative esterase/lipase 2, found in Mycoplasma pneumoniae (strain ATCC 29342 / M129 / Subtype 1) (Mycoplasmoides pneumoniae).